Consider the following 448-residue polypeptide: Methylenetetrahydrofolate--tRNA-(uracil-5-)-methyltransferase TrmFO (448 aa).

Residue 10–15 coordinates FAD; sequence GAGLAG.

Belongs to the MnmG family. TrmFO subfamily. FAD is required as a cofactor.

The protein localises to the cytoplasm. The enzyme catalyses uridine(54) in tRNA + (6R)-5,10-methylene-5,6,7,8-tetrahydrofolate + NADH + H(+) = 5-methyluridine(54) in tRNA + (6S)-5,6,7,8-tetrahydrofolate + NAD(+). The catalysed reaction is uridine(54) in tRNA + (6R)-5,10-methylene-5,6,7,8-tetrahydrofolate + NADPH + H(+) = 5-methyluridine(54) in tRNA + (6S)-5,6,7,8-tetrahydrofolate + NADP(+). Catalyzes the folate-dependent formation of 5-methyl-uridine at position 54 (M-5-U54) in all tRNAs. In Lactococcus lactis subsp. cremoris (strain MG1363), this protein is Methylenetetrahydrofolate--tRNA-(uracil-5-)-methyltransferase TrmFO.